A 342-amino-acid chain; its full sequence is L-threonine 3-dehydrogenase (342 aa).

Residue C38 participates in Zn(2+) binding. Catalysis depends on charge relay system residues T40 and H43. Zn(2+) contacts are provided by H63, E64, C93, C96, C99, and C107. NAD(+) contacts are provided by residues I175, D195, R200, 262–264, and 286–287; these read LGI and IY.

This sequence belongs to the zinc-containing alcohol dehydrogenase family. In terms of assembly, homotetramer. It depends on Zn(2+) as a cofactor.

The protein resides in the cytoplasm. It carries out the reaction L-threonine + NAD(+) = (2S)-2-amino-3-oxobutanoate + NADH + H(+). Its pathway is amino-acid degradation; L-threonine degradation via oxydo-reductase pathway; glycine from L-threonine: step 1/2. In terms of biological role, catalyzes the NAD(+)-dependent oxidation of L-threonine to 2-amino-3-ketobutyrate. The protein is L-threonine 3-dehydrogenase of Burkholderia vietnamiensis (strain G4 / LMG 22486) (Burkholderia cepacia (strain R1808)).